Consider the following 256-residue polypeptide: H-2 class II histocompatibility antigen, A-K alpha chain (256 aa).

The signal sequence occupies residues 1 to 23; the sequence is MPRSRALILGVLALTTMLSLCGG. The tract at residues 24-111 is alpha-1; sequence EDDIEADHVG…KRSNSTPATN (88 aa). Residues 24–218 lie on the Extracellular side of the membrane; it reads EDDIEADHVG…IPAPMSELTE (195 aa). 2 N-linked (GlcNAc...) asparagine glycosylation sites follow: N105 and N145. Residues 112–205 form an alpha-2 region; that stretch reads EAPQATVFPK…GLEEPVLKHW (94 aa). The Ig-like C1-type domain maps to 114–206; sequence PQATVFPKSP…LEEPVLKHWE (93 aa). C134 and C190 form a disulfide bridge. Residues 206–218 form a connecting peptide region; that stretch reads EPEIPAPMSELTE. Residues 219 to 241 traverse the membrane as a helical segment; it reads TVVCALGLSVGLVGIVVGTIFII. At 242–256 the chain is on the cytoplasmic side; it reads QGLRSGGTSRHPGPL.

Belongs to the MHC class II family.

The protein localises to the membrane. This is H-2 class II histocompatibility antigen, A-K alpha chain (H2-Aa) from Mus musculus (Mouse).